The sequence spans 394 residues: Elongation factor Tu 1 (394 aa).

One can recognise a tr-type G domain in the interval 10-204 (KPHVNVGTIG…ALDSYIPEPQ (195 aa)). The segment at 19 to 26 (GHVDHGKT) is G1. 19–26 (GHVDHGKT) is a GTP binding site. Position 26 (Thr26) interacts with Mg(2+). The interval 60–64 (GITIS) is G2. The interval 81–84 (DCPG) is G3. GTP contacts are provided by residues 81–85 (DCPGH) and 136–139 (NKCD). Residues 136-139 (NKCD) are G4. The G5 stretch occupies residues 174–176 (SAL).

This sequence belongs to the TRAFAC class translation factor GTPase superfamily. Classic translation factor GTPase family. EF-Tu/EF-1A subfamily. Monomer.

The protein resides in the cytoplasm. The catalysed reaction is GTP + H2O = GDP + phosphate + H(+). GTP hydrolase that promotes the GTP-dependent binding of aminoacyl-tRNA to the A-site of ribosomes during protein biosynthesis. This is Elongation factor Tu 1 from Pseudoalteromonas translucida (strain TAC 125).